A 415-amino-acid chain; its full sequence is 3-isopropylmalate dehydratase large subunit (415 aa).

3 residues coordinate [4Fe-4S] cluster: Cys-295, Cys-353, and Cys-356.

Belongs to the aconitase/IPM isomerase family. LeuC type 2 subfamily. As to quaternary structure, heterodimer of LeuC and LeuD. [4Fe-4S] cluster serves as cofactor.

The enzyme catalyses (2R,3S)-3-isopropylmalate = (2S)-2-isopropylmalate. The protein operates within amino-acid biosynthesis; L-leucine biosynthesis; L-leucine from 3-methyl-2-oxobutanoate: step 2/4. Its function is as follows. Catalyzes the isomerization between 2-isopropylmalate and 3-isopropylmalate, via the formation of 2-isopropylmaleate. The sequence is that of 3-isopropylmalate dehydratase large subunit from Pyrobaculum neutrophilum (strain DSM 2338 / JCM 9278 / NBRC 100436 / V24Sta) (Thermoproteus neutrophilus).